The sequence spans 394 residues: Xylose isomerase (394 aa).

Residues His-54 and Asp-57 contribute to the active site. Mg(2+)-binding residues include Glu-181, Glu-217, His-220, Asp-245, Asp-255, Asp-257, and Asp-292.

Belongs to the xylose isomerase family. Homotetramer. It depends on Mg(2+) as a cofactor.

It is found in the cytoplasm. The enzyme catalyses alpha-D-xylose = alpha-D-xylulofuranose. The chain is Xylose isomerase (xylA) from Actinoplanes sp. (strain ATCC 31351 / 3876) (Ampullariella sp.).